We begin with the raw amino-acid sequence, 305 residues long: 3-methyl-2-oxobutanoate hydroxymethyltransferase (305 aa).

D52 and D95 together coordinate Mg(2+). Residues 52–53 (DS), D95, and K125 contribute to the 3-methyl-2-oxobutanoate site. E127 lines the Mg(2+) pocket. The Proton acceptor role is filled by E194.

It belongs to the PanB family. Homodecamer; pentamer of dimers. It depends on Mg(2+) as a cofactor.

The protein resides in the cytoplasm. It catalyses the reaction 3-methyl-2-oxobutanoate + (6R)-5,10-methylene-5,6,7,8-tetrahydrofolate + H2O = 2-dehydropantoate + (6S)-5,6,7,8-tetrahydrofolate. The protein operates within cofactor biosynthesis; (R)-pantothenate biosynthesis; (R)-pantoate from 3-methyl-2-oxobutanoate: step 1/2. In terms of biological role, catalyzes the reversible reaction in which hydroxymethyl group from 5,10-methylenetetrahydrofolate is transferred onto alpha-ketoisovalerate to form ketopantoate. In Anaeromyxobacter sp. (strain Fw109-5), this protein is 3-methyl-2-oxobutanoate hydroxymethyltransferase.